The primary structure comprises 633 residues: uncharacterized protein (633 aa).

The disordered stretch occupies residues 1-188; that stretch reads MNNRGGFSHP…GQSSFYNSSY (188 aa). Low complexity-rich tracts occupy residues 32–80 and 104–148; these read GQPQ…GGNN and NNGN…TNSR. A compositionally biased stretch (gly residues) spans 152 to 178; the sequence is RGGSSRGGSSRGGNSGSSRGGSRGGYR. The stretch at 580–607 forms a coiled coil; it reads KSKNWTVDQASDELKKLSKNLRLLVSKH. The interval 611-633 is disordered; the sequence is TKFQPPSADHTTQFEQDDEEEEN.

This is an uncharacterized protein from Dictyostelium discoideum (Social amoeba).